Reading from the N-terminus, the 127-residue chain is MAPKAEKKPASKAPAAKKTTASTDASKKRTKTRKETYSSYIYKVLKQTHPDTGISQKSMSILNSFVNDIFERIASEASKLAAYNKKSTISAREIQTAVRLILPGELAKHAVSEGTRAVTKYSSSTQA.

A disordered region spans residues 1-35 (MAPKAEKKPASKAPAAKKTTASTDASKKRTKTRKE). An N6-acetyllysine; alternate mark is found at Lys-7 and Lys-8. Residues Lys-7 and Lys-8 each participate in a glycyl lysine isopeptide (Lys-Gly) (interchain with G-Cter in SUMO); alternate cross-link. Residue Ser-11 is modified to Phosphoserine. Over residues 11–24 (SKAPAAKKTTASTD) the composition is skewed to low complexity. An N6-acetyllysine modification is found at Lys-12. Lys-120 is covalently cross-linked (Glycyl lysine isopeptide (Lys-Gly) (interchain with G-Cter in ubiquitin)).

It belongs to the histone H2B family. As to quaternary structure, the nucleosome is a histone octamer containing two molecules each of H2A, H2B, H3 and H4 assembled in one H3-H4 heterotetramer and two H2A-H2B heterodimers. The octamer wraps approximately 147 bp of DNA. In terms of processing, monoubiquitinated by the UBC2-BRE1 complex to form H2BK123ub1. H2BK123ub1 gives a specific tag for epigenetic transcriptional activation and is also prerequisite for H3K4me and H3K79me formation. H2BK123ub1 also modulates the formation of double-strand breaks during meiosis and is a prerequisite for DNA-damage checkpoint activation. Phosphorylated by STE20 to form H2BS10ph during progression through meiotic prophase. May be correlated with chromosome condensation. Post-translationally, acetylation of N-terminal lysines and particularly formation of H2BK11ac has a positive effect on transcription. In terms of processing, sumoylation to form H2BK6su or H2BK7su occurs preferentially near the telomeres and represses gene transcription.

Its subcellular location is the nucleus. It is found in the chromosome. Core component of nucleosome. Nucleosomes wrap and compact DNA into chromatin, limiting DNA accessibility to the cellular machineries which require DNA as a template. Histones thereby play a central role in transcription regulation, DNA repair, DNA replication and chromosomal stability. DNA accessibility is regulated via a complex set of post-translational modifications of histones, also called histone code, and nucleosome remodeling. This Eremothecium gossypii (strain ATCC 10895 / CBS 109.51 / FGSC 9923 / NRRL Y-1056) (Yeast) protein is Histone H2B.2 (HTB2).